The sequence spans 86 residues: RNA-binding protein Hfq (86 aa).

The Sm domain maps to 9 to 69; the sequence is DRFLNILRTS…VSTIMPESFV (61 aa).

The protein belongs to the Hfq family. Homohexamer.

Functionally, RNA chaperone that binds small regulatory RNA (sRNAs) and mRNAs to facilitate mRNA translational regulation in response to envelope stress, environmental stress and changes in metabolite concentrations. Also binds with high specificity to tRNAs. The protein is RNA-binding protein Hfq of Thermosipho melanesiensis (strain DSM 12029 / CIP 104789 / BI429).